A 55-amino-acid chain; its full sequence is Large ribosomal subunit protein bL33 (55 aa).

This sequence belongs to the bacterial ribosomal protein bL33 family.

The polypeptide is Large ribosomal subunit protein bL33 (Acidothermus cellulolyticus (strain ATCC 43068 / DSM 8971 / 11B)).